The primary structure comprises 149 residues: UPF0260 protein PSEEN4031 (149 aa).

Belongs to the UPF0260 family.

The chain is UPF0260 protein PSEEN4031 from Pseudomonas entomophila (strain L48).